A 184-amino-acid polypeptide reads, in one-letter code: Ribosome-recycling factor (184 aa).

This sequence belongs to the RRF family.

Its subcellular location is the cytoplasm. In terms of biological role, responsible for the release of ribosomes from messenger RNA at the termination of protein biosynthesis. May increase the efficiency of translation by recycling ribosomes from one round of translation to another. This chain is Ribosome-recycling factor, found in Borreliella afzelii (strain PKo) (Borrelia afzelii).